We begin with the raw amino-acid sequence, 286 residues long: Enoyl-CoA hydratase ChsH3 (286 aa).

Residues 163–271 form the MaoC-like domain; that stretch reads APERAPDLQV…RLVASVVAPT (109 aa). Residues D189 and H194 contribute to the active site.

It belongs to the enoyl-CoA hydratase/isomerase family. Homodimer.

The catalysed reaction is (22E)-3-oxochola-4,22-dien-24-oyl-CoA + H2O = (22S)-hydroxy-3-oxo-chol-4-ene-24-oyl-CoA. The protein operates within steroid metabolism; cholesterol degradation. Functionally, degradation of the cholesterol side chain involves 3 multistep beta-oxidation cycles, this is involved in the second cycle. Hydrates bulky steroid enoyl-CoA esters, has highest activity with 3-OCDO-CoA (3-oxochol-4,22-dien-24-oyl-CoA) making (22S)-HOCO-CoA, followed by octenoyl-CoA, with weaker activity on 3-OCDS-CoA (3-oxocholest-4,24-dien-26-oyl-CoA) and none on 3-OPDC-CoA (3-oxo-pregna-4,17-diene-20- carboxyl-CoA). Hydrates the same substrate as EchA19, but the 2 enzymes make different stereoisomers of the product. The chain is Enoyl-CoA hydratase ChsH3 from Mycobacterium tuberculosis (strain ATCC 25618 / H37Rv).